The following is a 107-amino-acid chain: HASRATDGKKRRKRRKESYGIYIYKVLKQVHPDTGISSRAMSIMNSFVNDVFERIAGEASRLAQYNKKSTISSREVQTAVRLLLPGELAKHAVSEGTKAVTKYTTSK.

An O-linked (GlcNAc) serine glycan is attached at Ser94. Lys102 is covalently cross-linked (Glycyl lysine isopeptide (Lys-Gly) (interchain with G-Cter in ubiquitin)).

This sequence belongs to the histone H2B family. As to quaternary structure, the nucleosome is a histone octamer containing two molecules each of H2A, H2B, H3 and H4 assembled in one H3-H4 heterotetramer and two H2A-H2B heterodimers. The octamer wraps approximately 147 bp of DNA. In terms of processing, monoubiquitination gives a specific tag for epigenetic transcriptional activation and is also prerequisite for histone H3 'Lys-4' and 'Lys-79' methylation. GlcNAcylation at Ser-94 promotes monoubiquitination of Lys-102. It fluctuates in response to extracellular glucose, and associates with transcribed genes.

The protein localises to the nucleus. It localises to the chromosome. Functionally, core component of nucleosome. Nucleosomes wrap and compact DNA into chromatin, limiting DNA accessibility to the cellular machineries which require DNA as a template. Histones thereby play a central role in transcription regulation, DNA repair, DNA replication and chromosomal stability. DNA accessibility is regulated via a complex set of post-translational modifications of histones, also called histone code, and nucleosome remodeling. The sequence is that of Late histone H2B.L4 from Strongylocentrotus purpuratus (Purple sea urchin).